The following is a 154-amino-acid chain: Ascorbate-specific PTS system EIIA component (154 aa).

The PTS EIIA type-2 domain occupies 6-150 (SLAENKSIRL…QEVLDLIDRT (145 aa)). Catalysis depends on histidine 68, which acts as the Tele-phosphohistidine intermediate. The residue at position 68 (histidine 68) is a Phosphohistidine.

The protein resides in the cytoplasm. In terms of biological role, the phosphoenolpyruvate-dependent sugar phosphotransferase system (sugar PTS), a major carbohydrate active transport system, catalyzes the phosphorylation of incoming sugar substrates concomitantly with their translocation across the cell membrane. The enzyme II UlaABC PTS system is involved in ascorbate transport. In Shigella flexneri, this protein is Ascorbate-specific PTS system EIIA component (ulaC).